The chain runs to 396 residues: Elongation factor Tu (396 aa).

The region spanning 10-205 is the tr-type G domain; sequence KSHANIGTIG…AVDEYIPTPE (196 aa). Residues 19 to 26 are G1; that stretch reads GHVDHGKT. 19–26 is a GTP binding site; it reads GHVDHGKT. Residue Thr26 coordinates Mg(2+). Residues 61–65 form a G2 region; that stretch reads GITIS. Residues 82–85 are G3; it reads DCPG. Residues 82–86 and 137–140 each bind GTP; these read DCPGH and NKCD. The tract at residues 137 to 140 is G4; that stretch reads NKCD. The interval 175 to 177 is G5; the sequence is SAL.

The protein belongs to the TRAFAC class translation factor GTPase superfamily. Classic translation factor GTPase family. EF-Tu/EF-1A subfamily. Monomer.

Its subcellular location is the cytoplasm. It catalyses the reaction GTP + H2O = GDP + phosphate + H(+). GTP hydrolase that promotes the GTP-dependent binding of aminoacyl-tRNA to the A-site of ribosomes during protein biosynthesis. The sequence is that of Elongation factor Tu from Bacillus velezensis (strain DSM 23117 / BGSC 10A6 / LMG 26770 / FZB42) (Bacillus amyloliquefaciens subsp. plantarum).